Consider the following 310-residue polypeptide: MVDKDTERDIEMKRQLRRLRELHLYSTWKKYQEAMKTSLGVPQCERDEGSLGKPLCPPEILSETLPGSVKKRVCFPSEDHLEEFIAEHLPEASNQSLLTVAHADAGTQTNGDLEDLEEHGPGQTVSEEATEVHTMEGDPDTLAEFLIRDVLQELSSYNGEEEDPEEVKTSLGVPQRGDLEDLEEHVPGQTVSEEATGVHMMQVDPATLAKSDLEDLEEHVPEQTVSEEATGVHMMQVDPATLAKQLEDSTITGSHQQMSASPSSAPAEEATEKTKVEEEVKTRKPKKKTRKPSKKSRWNVLKCWDIFNIF.

Disordered regions lie at residues 39–58 (LGVP…LCPP), 108–136 (QTNG…HTME), 156–184 (SYNG…DLEE), and 250–297 (TITG…KKSR). The segment covering 259–268 (SASPSSAPAE) has biased composition (low complexity). Residues 270–282 (ATEKTKVEEEVKT) show a composition bias toward basic and acidic residues. Residues 283-297 (RKPKKKTRKPSKKSR) are compositionally biased toward basic residues.

Belongs to the FAM153 family.

The protein is Protein FAM153A (FAM153A) of Homo sapiens (Human).